Here is a 314-residue protein sequence, read N- to C-terminus: 3'-5' exoribonuclease YhaM (314 aa).

The HD domain occupies 163-279 (HVVSMLDLAK…LHYIDNLDAK (117 aa)).

This sequence belongs to the YhaM family.

Shows a 3'-5' exoribonuclease activity. This Bacillus mycoides (strain KBAB4) (Bacillus weihenstephanensis) protein is 3'-5' exoribonuclease YhaM.